Consider the following 357-residue polypeptide: Histidinol-phosphate aminotransferase (357 aa).

Lys218 carries the post-translational modification N6-(pyridoxal phosphate)lysine.

The protein belongs to the class-II pyridoxal-phosphate-dependent aminotransferase family. Histidinol-phosphate aminotransferase subfamily. Homodimer. Pyridoxal 5'-phosphate is required as a cofactor.

The enzyme catalyses L-histidinol phosphate + 2-oxoglutarate = 3-(imidazol-4-yl)-2-oxopropyl phosphate + L-glutamate. The protein operates within amino-acid biosynthesis; L-histidine biosynthesis; L-histidine from 5-phospho-alpha-D-ribose 1-diphosphate: step 7/9. This is Histidinol-phosphate aminotransferase from Prosthecochloris aestuarii (strain DSM 271 / SK 413).